Consider the following 202-residue polypeptide: Putative 3-methyladenine DNA glycosylase (202 aa).

The protein belongs to the DNA glycosylase MPG family.

In Rhodopseudomonas palustris (strain BisB5), this protein is Putative 3-methyladenine DNA glycosylase.